A 250-amino-acid chain; its full sequence is Probable aquaporin TIP-type (250 aa).

The next 2 membrane-spanning stretches (helical) occupy residues A20 to Y42 and G55 to V77. The short motif at N83–A85 is the NPA 1 element. The next 3 helical transmembrane spans lie at T97–L119, I140–A162, and I172–G194. The NPA 2 signature appears at N197–A199. The helical transmembrane segment at W215 to I237 threads the bilayer.

Belongs to the MIP/aquaporin (TC 1.A.8) family. TIP (TC 1.A.8.10) subfamily. Expressed in mature seeds and dark-grown seedlings.

The protein localises to the vacuole membrane. In terms of biological role, channel protein in tonoplast. These proteins may allow the diffusion of amino acids and/or peptides from the vacuolar compartment to the cytoplasm. This is Probable aquaporin TIP-type (DIP) from Antirrhinum majus (Garden snapdragon).